Consider the following 213-residue polypeptide: MSLKQSFPLLETRGLLIVFEGCDKTGKSTQCKLLFEELKQKNIEVRMINFPNRTTQTGKLIDQYLKGKIYLSDEDIHILFSKNRWEIIDTIKTNILNGITVIIDRYSYSGIAFSVAKGLDFQWCKQTENGLLKPDIIIYLTGQTKNMASRNGYGSEIYERIEIQDKVKKCYEKMIEIPLWNKINADQDVLIIKKQIETIIQKFSLENNKLEYI.

Position 21-28 (21-28) interacts with ATP; the sequence is GCDKTGKS.

It belongs to the thymidylate kinase family.

The catalysed reaction is dTMP + ATP = dTDP + ADP. Its pathway is pyrimidine metabolism; dTTP biosynthesis. Functionally, catalyzes the conversion of dTMP to dTDP. The chain is Putative thymidylate kinase 251L from Acheta domesticus (House cricket).